The primary structure comprises 122 residues: Large ribosomal subunit protein uL14c (122 aa).

Belongs to the universal ribosomal protein uL14 family. As to quaternary structure, part of the 50S ribosomal subunit.

Its subcellular location is the plastid. The protein resides in the chloroplast. Functionally, binds to 23S rRNA. This chain is Large ribosomal subunit protein uL14c, found in Phalaenopsis aphrodite subsp. formosana (Moth orchid).